Consider the following 69-residue polypeptide: MLLYIVIIVACIISKLVPNEYWAIHLFFIIMIFMVYMYKKLDIHQKYQFWNYTMSGLSGHNVQVTCKCY.

At 1-15 the chain is on the cytoplasmic side; sequence MLLYIVIIVACIISK. The helical transmembrane segment at 16–36 threads the bilayer; it reads LVPNEYWAIHLFFIIMIFMVY. The Extracellular segment spans residues 37–69; that stretch reads MYKKLDIHQKYQFWNYTMSGLSGHNVQVTCKCY. Residue Asn51 is glycosylated (N-linked (GlcNAc...) asparagine; by host).

The protein belongs to the asfivirus X69R family.

The protein localises to the host membrane. This is an uncharacterized protein from African swine fever virus (isolate Tick/Malawi/Lil 20-1/1983) (ASFV).